Reading from the N-terminus, the 500-residue chain is Histidine--tRNA ligase (500 aa).

Belongs to the class-II aminoacyl-tRNA synthetase family. Homodimer.

It localises to the cytoplasm. The enzyme catalyses tRNA(His) + L-histidine + ATP = L-histidyl-tRNA(His) + AMP + diphosphate + H(+). The protein is Histidine--tRNA ligase of Ruegeria sp. (strain TM1040) (Silicibacter sp.).